A 175-amino-acid chain; its full sequence is Glucagon family neuropeptides (175 aa).

Residues 1-23 (MSGNVYKTLLTLLVYGLIMHCNV) form the signal peptide. Positions 24 to 80 (YCSPDRWTPVPGAKLEEEVYDEDGNTLQDFALRAGAPGGGGPRPRWGRCTALYYPPG) are excised as a propeptide. Positions 149 to 157 (VKKYLAAVL) are important for receptor binding. A Leucine amide modification is found at L157. At K168 the chain carries Lysine amide. Positions 172-175 (VAYL) are excised as a propeptide.

Belongs to the glucagon family.

Its subcellular location is the secreted. Its function is as follows. Primary role of GRF is to release GH from the pituitary. In terms of biological role, PACAP is a neuropeptide involved in diverse array of physiological processes through activating the PACAP subfamily of class B1 G protein-coupled receptors: VIP receptor 1 (VIPR1), VIP receptor 2 (VIPR2), and PACAP type I receptor (ADCYAP1R1). Exerts neuroprotective and general cytoprotective effects due to anti-apoptotic, anti-inflammatory, and antioxidant actions. Promotes neuron projection development through the RAPGEF2/Rap1/B-Raf/ERK pathway. In chromaffin cells, induces long-lasting increase of intracellular calcium concentrations and neuroendocrine secretion. Involved in the control of glucose homeostasis, induces insulin secretion by pancreatic beta cells. PACAP exists in two bioactive forms from proteolysis of the same precursor protein, PACAP27 and PACAP38, which differ by eleven amino acid residues in the C-terminus. The sequence is that of Glucagon family neuropeptides (ADCYAP1) from Gallus gallus (Chicken).